Consider the following 290-residue polypeptide: Ribosome-inactivating protein bryodin I (290 aa).

An N-terminal signal peptide occupies residues 1–23; it reads MIKLLVLWLLILTIFLKSPTVEG. Residues glutamate 183 and glutamate 212 contribute to the active site. N-linked (GlcNAc...) asparagine glycosylation is found at asparagine 214 and asparagine 250. A propeptide spans 271-290 (removed in mature form); that stretch reads AIGEDISMTLIGFEHGLYGI.

Belongs to the ribosome-inactivating protein family. Type 1 RIP subfamily. Post-translationally, appears to undergo proteolytic cleavage in the C-terminal to produce a shorter protein.

It carries out the reaction Endohydrolysis of the N-glycosidic bond at one specific adenosine on the 28S rRNA.. Ribosome-inactivating protein of type 1, inhibits protein synthesis in animal cells. This is Ribosome-inactivating protein bryodin I from Bryonia dioica (Red bryony).